The chain runs to 408 residues: Dual-specificity RNA methyltransferase RlmN (408 aa).

The Proton acceptor role is filled by Glu-122. One can recognise a Radical SAM core domain in the interval 128–369; the sequence is EEDRGTLCIS…NRAGYASPIR (242 aa). Cysteines 135 and 380 form a disulfide. Cys-142, Cys-146, and Cys-149 together coordinate [4Fe-4S] cluster. Residues 206–207, Ser-238, 260–262, and Asn-337 each bind S-adenosyl-L-methionine; these read GE and SLH. The active-site S-methylcysteine intermediate is Cys-380.

It belongs to the radical SAM superfamily. RlmN family. The cofactor is [4Fe-4S] cluster.

It is found in the cytoplasm. The enzyme catalyses adenosine(2503) in 23S rRNA + 2 reduced [2Fe-2S]-[ferredoxin] + 2 S-adenosyl-L-methionine = 2-methyladenosine(2503) in 23S rRNA + 5'-deoxyadenosine + L-methionine + 2 oxidized [2Fe-2S]-[ferredoxin] + S-adenosyl-L-homocysteine. It catalyses the reaction adenosine(37) in tRNA + 2 reduced [2Fe-2S]-[ferredoxin] + 2 S-adenosyl-L-methionine = 2-methyladenosine(37) in tRNA + 5'-deoxyadenosine + L-methionine + 2 oxidized [2Fe-2S]-[ferredoxin] + S-adenosyl-L-homocysteine. In terms of biological role, specifically methylates position 2 of adenine 2503 in 23S rRNA and position 2 of adenine 37 in tRNAs. m2A2503 modification seems to play a crucial role in the proofreading step occurring at the peptidyl transferase center and thus would serve to optimize ribosomal fidelity. The protein is Dual-specificity RNA methyltransferase RlmN of Chelativorans sp. (strain BNC1).